The primary structure comprises 282 residues: Ribosome-inactivating protein bryodin II (282 aa).

Residues 1–21 (MRSIGFYSVLALYVGAHVTED) form the signal peptide. The N-linked (GlcNAc...) asparagine glycan is linked to N25. Residue E183 is part of the active site.

The protein belongs to the ribosome-inactivating protein family. Type 1 RIP subfamily.

It carries out the reaction Endohydrolysis of the N-glycosidic bond at one specific adenosine on the 28S rRNA.. Its function is as follows. Ribosome-inactivating protein of type 1, inhibits protein synthesis in animal cells. In Bryonia dioica (Red bryony), this protein is Ribosome-inactivating protein bryodin II.